We begin with the raw amino-acid sequence, 876 residues long: Xylosyltransferase oxt (876 aa).

At 1–14 (MEQSVSARWLKRYR) the chain is on the cytoplasmic side. The helical; Signal-anchor for type II membrane protein transmembrane segment at 15-35 (AFFLILLLIVAIQLFLAYKSL) threads the bilayer. Residues 36–876 (DIVGGGSGSG…PKSDVDALLK (841 aa)) lie on the Lumenal side of the membrane. Residues 48-67 (AAEAPASPPPPHAQARVQPP) form a disordered region. Intrachain disulfides connect cysteine 83–cysteine 111, cysteine 127–cysteine 465, cysteine 484–cysteine 497, and cysteine 486–cysteine 495. N-linked (GlcNAc...) asparagine glycans are attached at residues asparagine 131 and asparagine 135. The 95-residue stretch at 134–228 (ANVSLGCFKD…FYAMNIYETG (95 aa)) folds into the WSC domain. UDP-alpha-D-xylose contacts are provided by residues aspartate 283 and 312 to 314 (TIW). An N-linked (GlcNAc...) asparagine glycan is attached at asparagine 342. Residue 415–416 (DW) participates in UDP-alpha-D-xylose binding. UDP-alpha-D-xylose contacts are provided by residues serine 498 and 522-523 (RK). N-linked (GlcNAc...) asparagine glycosylation is found at asparagine 696 and asparagine 725. Residues cysteine 842 and cysteine 855 are joined by a disulfide bond.

Belongs to the glycosyltransferase 14 family. XylT subfamily. Ca(2+) is required as a cofactor. It depends on Mn(2+) as a cofactor. The cofactor is Mg(2+).

The protein localises to the endoplasmic reticulum membrane. Its subcellular location is the golgi apparatus membrane. The catalysed reaction is UDP-alpha-D-xylose + L-seryl-[protein] = 3-O-(beta-D-xylosyl)-L-seryl-[protein] + UDP + H(+). It participates in glycan metabolism; chondroitin sulfate biosynthesis. The protein operates within glycan metabolism; heparan sulfate biosynthesis. Its function is as follows. Catalyzes the first step in biosynthesis of glycosaminoglycan. Transfers D-xylose from UDP-D-xylose to specific serine residues of the core protein. The sequence is that of Xylosyltransferase oxt from Drosophila melanogaster (Fruit fly).